The sequence spans 471 residues: 3-isopropylmalate dehydratase large subunit (471 aa).

Cysteine 347, cysteine 407, and cysteine 410 together coordinate [4Fe-4S] cluster.

It belongs to the aconitase/IPM isomerase family. LeuC type 1 subfamily. Heterodimer of LeuC and LeuD. Requires [4Fe-4S] cluster as cofactor.

It carries out the reaction (2R,3S)-3-isopropylmalate = (2S)-2-isopropylmalate. It participates in amino-acid biosynthesis; L-leucine biosynthesis; L-leucine from 3-methyl-2-oxobutanoate: step 2/4. Its function is as follows. Catalyzes the isomerization between 2-isopropylmalate and 3-isopropylmalate, via the formation of 2-isopropylmaleate. The chain is 3-isopropylmalate dehydratase large subunit from Geobacillus sp. (strain WCH70).